Consider the following 282-residue polypeptide: 4-hydroxy-3-methylbut-2-enyl diphosphate reductase (282 aa).

Position 12 (Cys12) interacts with [4Fe-4S] cluster. (2E)-4-hydroxy-3-methylbut-2-enyl diphosphate is bound by residues His40 and His72. Residues His40 and His72 each contribute to the dimethylallyl diphosphate site. 2 residues coordinate isopentenyl diphosphate: His40 and His72. Residue Cys94 participates in [4Fe-4S] cluster binding. His122 serves as a coordination point for (2E)-4-hydroxy-3-methylbut-2-enyl diphosphate. Residue His122 participates in dimethylallyl diphosphate binding. An isopentenyl diphosphate-binding site is contributed by His122. The Proton donor role is filled by Glu124. Thr160 contacts (2E)-4-hydroxy-3-methylbut-2-enyl diphosphate. Cys188 contacts [4Fe-4S] cluster. Residues Ser216, Asn218, and Ser260 each contribute to the (2E)-4-hydroxy-3-methylbut-2-enyl diphosphate site. Dimethylallyl diphosphate contacts are provided by Ser216, Asn218, and Ser260. Positions 216, 218, and 260 each coordinate isopentenyl diphosphate.

It belongs to the IspH family. The cofactor is [4Fe-4S] cluster.

It carries out the reaction isopentenyl diphosphate + 2 oxidized [2Fe-2S]-[ferredoxin] + H2O = (2E)-4-hydroxy-3-methylbut-2-enyl diphosphate + 2 reduced [2Fe-2S]-[ferredoxin] + 2 H(+). It catalyses the reaction dimethylallyl diphosphate + 2 oxidized [2Fe-2S]-[ferredoxin] + H2O = (2E)-4-hydroxy-3-methylbut-2-enyl diphosphate + 2 reduced [2Fe-2S]-[ferredoxin] + 2 H(+). The protein operates within isoprenoid biosynthesis; dimethylallyl diphosphate biosynthesis; dimethylallyl diphosphate from (2E)-4-hydroxy-3-methylbutenyl diphosphate: step 1/1. It functions in the pathway isoprenoid biosynthesis; isopentenyl diphosphate biosynthesis via DXP pathway; isopentenyl diphosphate from 1-deoxy-D-xylulose 5-phosphate: step 6/6. Functionally, catalyzes the conversion of 1-hydroxy-2-methyl-2-(E)-butenyl 4-diphosphate (HMBPP) into a mixture of isopentenyl diphosphate (IPP) and dimethylallyl diphosphate (DMAPP). Acts in the terminal step of the DOXP/MEP pathway for isoprenoid precursor biosynthesis. The protein is 4-hydroxy-3-methylbut-2-enyl diphosphate reductase of Geobacter sulfurreducens (strain ATCC 51573 / DSM 12127 / PCA).